A 412-amino-acid polypeptide reads, in one-letter code: Multifunctional CCA protein (412 aa).

Positions 8 and 11 each coordinate ATP. Residues glycine 8 and arginine 11 each coordinate CTP. Mg(2+)-binding residues include aspartate 21 and aspartate 23. The ATP site is built by arginine 91, arginine 137, and arginine 140. CTP-binding residues include arginine 91, arginine 137, and arginine 140. Residues 228–329 (TGIHTLMTLS…VKLFDSIDAW (102 aa)) enclose the HD domain.

It belongs to the tRNA nucleotidyltransferase/poly(A) polymerase family. Bacterial CCA-adding enzyme type 1 subfamily. Monomer. Can also form homodimers and oligomers. Mg(2+) is required as a cofactor. Requires Ni(2+) as cofactor.

The enzyme catalyses a tRNA precursor + 2 CTP + ATP = a tRNA with a 3' CCA end + 3 diphosphate. The catalysed reaction is a tRNA with a 3' CCA end + 2 CTP + ATP = a tRNA with a 3' CCACCA end + 3 diphosphate. Catalyzes the addition and repair of the essential 3'-terminal CCA sequence in tRNAs without using a nucleic acid template. Adds these three nucleotides in the order of C, C, and A to the tRNA nucleotide-73, using CTP and ATP as substrates and producing inorganic pyrophosphate. tRNA 3'-terminal CCA addition is required both for tRNA processing and repair. Also involved in tRNA surveillance by mediating tandem CCA addition to generate a CCACCA at the 3' terminus of unstable tRNAs. While stable tRNAs receive only 3'-terminal CCA, unstable tRNAs are marked with CCACCA and rapidly degraded. The sequence is that of Multifunctional CCA protein from Escherichia coli O1:K1 / APEC.